The chain runs to 312 residues: Protein dif-1 (312 aa).

Solcar repeat units lie at residues 2–93, 102–193, and 203–289; these read SDVL…GKWL, MTFI…LKKK, and LSPG…TLAA. 6 helical membrane-spanning segments follow: residues 5–25, 69–89, 104–124, 172–192, 209–229, and 261–282; these read LLNF…GHPF, MAAP…GCAV, FIQN…VMVP, TLLR…YLKK, LMAG…ADVL, and LFKG…CFFG.

It belongs to the mitochondrial carrier (TC 2.A.29) family.

The protein resides in the mitochondrion inner membrane. Seems to play a role in the maintenance of tissue differentiation in the developing embryo, but not for its initiation. This Caenorhabditis elegans protein is Protein dif-1 (dif-1).